A 363-amino-acid chain; its full sequence is tRNA N6-adenosine threonylcarbamoyltransferase (363 aa).

Residues histidine 121 and histidine 125 each contribute to the Fe cation site. Substrate is bound by residues 143–147 (LASGG), aspartate 176, glycine 189, and asparagine 287. Aspartate 315 serves as a coordination point for Fe cation.

Belongs to the KAE1 / TsaD family. Fe(2+) is required as a cofactor.

The protein localises to the cytoplasm. The catalysed reaction is L-threonylcarbamoyladenylate + adenosine(37) in tRNA = N(6)-L-threonylcarbamoyladenosine(37) in tRNA + AMP + H(+). Required for the formation of a threonylcarbamoyl group on adenosine at position 37 (t(6)A37) in tRNAs that read codons beginning with adenine. Is involved in the transfer of the threonylcarbamoyl moiety of threonylcarbamoyl-AMP (TC-AMP) to the N6 group of A37, together with TsaE and TsaB. TsaD likely plays a direct catalytic role in this reaction. The protein is tRNA N6-adenosine threonylcarbamoyltransferase of Rhodopseudomonas palustris (strain ATCC BAA-98 / CGA009).